The chain runs to 177 residues: Large ribosomal subunit protein uL6 (177 aa).

It belongs to the universal ribosomal protein uL6 family. In terms of assembly, part of the 50S ribosomal subunit.

In terms of biological role, this protein binds to the 23S rRNA, and is important in its secondary structure. It is located near the subunit interface in the base of the L7/L12 stalk, and near the tRNA binding site of the peptidyltransferase center. This is Large ribosomal subunit protein uL6 from Pseudomonas putida (strain W619).